Reading from the N-terminus, the 926-residue chain is Probable Xaa-Pro aminopeptidase PTT_10145 (926 aa).

Asp-274, Asp-285, Glu-435, and Glu-476 together coordinate Mn(2+). Disordered regions lie at residues 505 to 538 (GNPGTTEILNPSPTPPRRMRSENRTPRLRAPGIS), 595 to 615 (KRDSVPTAPSRPTKAKNLSPV), 668 to 696 (SSSTQTSPKPMTVPTFESRQKSHTVEEKH), 711 to 741 (IGQSNRAIGPEERRRKAQSDHHHHSRLKAAT), and 865 to 926 (MPVL…FLTR). The span at 506–515 (NPGTTEILNP) shows a compositional bias: polar residues. 2 stretches are compositionally biased toward basic and acidic residues: residues 685–696 (SRQKSHTVEEKH) and 719–730 (GPEERRRKAQSD). Positions 887–897 (NNATNKRSMID) are enriched in polar residues. A compositionally biased stretch (basic and acidic residues) spans 900–915 (PAERRTRPERPERPAR).

The protein belongs to the peptidase M24B family. Mn(2+) serves as cofactor.

It carries out the reaction Release of any N-terminal amino acid, including proline, that is linked to proline, even from a dipeptide or tripeptide.. Functionally, catalyzes the removal of a penultimate prolyl residue from the N-termini of peptides. The protein is Probable Xaa-Pro aminopeptidase PTT_10145 of Pyrenophora teres f. teres (strain 0-1) (Barley net blotch fungus).